Reading from the N-terminus, the 240-residue chain is Lysoplasmalogenase TMEM86A (240 aa).

Residues 1–21 lie on the Cytoplasmic side of the membrane; sequence MVSPVTVVKSEGPKLVPFFKA. A helical transmembrane segment spans residues 22 to 42; the sequence is TCVYFVLWLPSSSPSWVSALI. Lysine 43 is a topological domain (extracellular). The helical transmembrane segment at 44 to 64 threads the bilayer; sequence CLPIFCLWLFLLAHGLGFLLT. Over 65-70 the chain is Cytoplasmic; sequence HPSATR. Residues 71-91 form a helical membrane-spanning segment; that stretch reads IFVGLVFSAIGDAFLIWQDQG. Position 92 (tyrosine 92) is a topological domain, extracellular. A helical transmembrane segment spans residues 93 to 113; the sequence is FVHGMLMFAVTHMLYASAFGM. The Cytoplasmic segment spans residues 114-115; it reads RP. A helical transmembrane segment spans residues 116–136; the sequence is LGLRTGLLMVILSGLCYAFLY. Over 137 to 138 the chain is Extracellular; the sequence is PN. A helical membrane pass occupies residues 139-159; that stretch reads LTGAFTYVVGVYVAIIGFMGW. Residues 160 to 174 are Cytoplasmic-facing; it reads RAMAGLQLVGAAWRW. A helical membrane pass occupies residues 175 to 195; it reads TELAAGTGALLFIVSDLTIAL. Residues 196–206 are Extracellular-facing; that stretch reads DKFCFPVPYSR. A helical membrane pass occupies residues 207–227; it reads ALIMSTYYAAQMLIALSAVES. Residues 228–240 are Cytoplasmic-facing; that stretch reads REPVEDYRLSKAK.

The protein belongs to the TMEM86 family.

It is found in the endoplasmic reticulum membrane. It catalyses the reaction a 1-O-(1Z-alkenyl)-sn-glycero-3-phosphocholine + H2O = a 2,3-saturated aldehyde + sn-glycerol 3-phosphocholine. The catalysed reaction is a 1-O-(1Z-alkenyl)-sn-glycero-3-phosphoethanolamine + H2O = a 2,3-saturated aldehyde + sn-glycero-3-phosphoethanolamine. Catalyzes the hydrolysis of the vinyl ether bond of choline or ethanolamine lysoplasmalogens, forming fatty aldehyde and glycerophosphocholine or glycerophosphoethanolamine, respectively and is specific for the sn-2-deacylated (lyso) form of plasmalogen. Plays an important role in lysoplasmalogen metabolism in the adipocyte tissue and macrophages. The polypeptide is Lysoplasmalogenase TMEM86A (TMEM86A) (Bos taurus (Bovine)).